A 249-amino-acid polypeptide reads, in one-letter code: Proteasome subunit alpha type-3 (249 aa).

The protein belongs to the peptidase T1A family. The 26S proteasome consists of a 20S proteasome core and two 19S regulatory subunits. The 20S proteasome core is composed of 28 subunits that are arranged in four stacked rings, resulting in a barrel-shaped structure. The two end rings are each formed by seven alpha subunits, and the two central rings are each formed by seven beta subunits. The catalytic chamber with the active sites is on the inside of the barrel.

It localises to the cytoplasm. Its subcellular location is the nucleus. In terms of biological role, the proteasome is a multicatalytic proteinase complex which is characterized by its ability to cleave peptides with Arg, Phe, Tyr, Leu, and Glu adjacent to the leaving group at neutral or slightly basic pH. The proteasome has an ATP-dependent proteolytic activity. The chain is Proteasome subunit alpha type-3 (PAG1) from Oryza sativa subsp. japonica (Rice).